The chain runs to 227 residues: Probable septum site-determining protein MinC (227 aa).

This sequence belongs to the MinC family. Interacts with MinD and FtsZ.

In terms of biological role, cell division inhibitor that blocks the formation of polar Z ring septums. Rapidly oscillates between the poles of the cell to destabilize FtsZ filaments that have formed before they mature into polar Z rings. Prevents FtsZ polymerization. The protein is Probable septum site-determining protein MinC of Acetivibrio thermocellus (strain ATCC 27405 / DSM 1237 / JCM 9322 / NBRC 103400 / NCIMB 10682 / NRRL B-4536 / VPI 7372) (Clostridium thermocellum).